The following is an 815-amino-acid chain: TBC1 domain family member 5 (815 aa).

Ser-44 bears the Phosphoserine mark. Residues 56–64 form a required for interaction with retromer; involved in interaction with ATG8 family proteins region; that stretch reads MKEWEELFV. An LIR 1 motif is present at residues 57–62; the sequence is KEWEEL. In terms of domain architecture, Rab-GAP TBC spans 81–359; the sequence is LRSSRFRSIC…VVWDALFADS (279 aa). At Arg-448 the chain carries Asymmetric dimethylarginine; alternate. Residue Arg-448 is modified to Omega-N-methylarginine; alternate. Phosphoserine is present on Ser-460. Residues 475 to 591 form a disordered region; it reads PGSMGGPVPG…SATKKDSFFS (117 aa). 2 stretches are compositionally biased toward low complexity: residues 483 to 492 and 510 to 539; these read PGNNSSSSFS and QQQQQQQHQQQQQQQPQQQQQQHQQQQQQQ. A phosphoserine mark is found at Ser-546, Ser-563, Ser-565, Ser-568, Ser-578, and Ser-608. The span at 556-568 shows a compositional bias: low complexity; sequence SSKTISSSPSIES. 2 disordered regions span residues 702 to 733 and 754 to 815; these read SGQDQGSQVPRAAKQASSEMPGCTGGTTPDDF and QPLL…PLDI. Residues 754–765 show a composition bias toward polar residues; that stretch reads QPLLTLRSTSGK. Over residues 783 to 796 the composition is skewed to low complexity; sequence PASASASSSNPSSS. The short motif at 805–809 is the LIR 2 element; it reads SGFTI. The tract at residues 806-811 is required for interaction with ATG8 family proteins; it reads GFTIVS. At Ser-811 the chain carries Phosphoserine.

As to quaternary structure, interacts with MAP1LC3A, MAP1LC3B, MAP1LC3C, GABARAP, GABARAPL1, GABARAPL2. Interacts with VPS29 and VPS35; indicative for an association with retromer CSC subcomplex. MAP1LC3A and VPS29 compete for binding to TBC1D5. Interacts with AP2M1; indicative for an association with the AP2 complex. Interacts with ULK1 and ATG13 (phosphorylated); indicative for an association with the activated ULK1-ATG13-FIP200 complex. Interacts with ATG9A; the interactions seems to be restricted to the AP2-clathrin-associated fraction of ATG9A.

Its subcellular location is the endosome membrane. It is found in the cytoplasmic vesicle. It localises to the autophagosome. May act as a GTPase-activating protein for Rab family protein(s). May act as a GAP for RAB7A. Can displace RAB7A and retromer CSC subcomplex from the endosomal membrane to the cytosol; at least retromer displacement seems to require its catalytic activity. Required for retrograde transport of cargo proteins from endosomes to the trans-Golgi network (TGN); the function seems to require its catalytic activity. Involved in regulation of autophagy. May act as a molecular switch between endosomal and autophagosomal transport and is involved in reprogramming vesicle trafficking upon autophagy induction. Involved in the trafficking of ATG9A upon activation of autophagy. May regulate the recruitment of ATG9A-AP2-containing vesicles to autophagic membranes. The protein is TBC1 domain family member 5 (Tbc1d5) of Mus musculus (Mouse).